The chain runs to 944 residues: MAKPRVHEIAAEIGVDSKTALAKLKEMGEFVKGPSSSIEPPVARKLKAALEAAGLTGQAAAPAAAPSSAPRPGARSSAPKPGGRPTPGPQPTAAPEVEAPEASDVPVPAKPLTVAERQAQAEASRKAAAEEKAQAEKSAASATPDAPAAETPSAPRPDAGSAPAPSNGIPRPGIPRPAAPRPGNNPFASNQGMGTKPRPGNNPFASNQGMGQRPAAGAAGPRPAAPRPGSPRPGAPRPGGVGQGARPAGFGQRPAGAGRPGGAPGGAGRPGAPAAGGFQRPAGGFAGRPGGGGRGRGPGGGTAGAFGRGGGKSKSRKSKRTKRAEFELREAPSLGGVSVPRGDGNTIVRLRRGASISDFADKIDASPGNLVTVLFHLGEMATATESLDEATFEVLGTELGYKIQVVSPEDEDRELLEGFDIDLDQELEDEDDDVLEIRPPVVTVMGHVDHGKTRLLDAIRNANVIEGEAGGITQHIGAYQVWAPHEGYERAITFIDTPGHEAFTAMRARGAQVTDIAILVVAADDGIMPQTVEALNHAQAANVPIVVAVNKVDKEGANPAKVRQQLTEYGLVAEEYGGDVMFVDVSALTGKGVEDLLEAVLLTADAGLDLRSNPNKDARGVAIEARLDKGRGAVATVLIQSGTLRVGDAIVAGTAYGRVRAMMDENGDAVHEAYPSRPVQVQGLSSVPGAGDTFLVTEEDRTARQIAEKREAVERNAQLAKARKRISLEDFTRALEEGKVESLNLIIKGDVSGAVEALEESLMKIEVDDSVQLRIIHRGVGAVTESDVNLATIDNAIIIGFNVRPDPKARARAAREGVDIRFYSVIYSALEEIESSLTGMLKPEFEEVQSGVAEIREVFRSSKFGNIAGVIVRSGTITRNAKARVIRDGVVVGDSLAIESLRRFKDDVSEVRTDFEAGIGLGKFNDIQIGDEIETIEMKEKPRV.

Low complexity predominate over residues 55–81 (LTGQAAAPAAAPSSAPRPGARSSAPKP). Residues 55–329 (LTGQAAAPAA…RTKRAEFELR (275 aa)) form a disordered region. Residues 82 to 92 (GGRPTPGPQPT) are compositionally biased toward pro residues. Positions 93-107 (AAPEVEAPEASDVPV) are enriched in low complexity. The span at 123–135 (ASRKAAAEEKAQA) shows a compositional bias: basic and acidic residues. 2 stretches are compositionally biased toward low complexity: residues 136 to 153 (EKSA…ETPS) and 211 to 222 (GQRPAAGAAGPR). The segment covering 223–236 (PAAPRPGSPRPGAP) has biased composition (pro residues). A compositionally biased stretch (low complexity) spans 244–257 (GARPAGFGQRPAGA). The segment covering 258-269 (GRPGGAPGGAGR) has biased composition (gly residues). The segment covering 270–283 (PGAPAAGGFQRPAG) has biased composition (low complexity). The segment covering 284-310 (GFAGRPGGGGRGRGPGGGTAGAFGRGG) has biased composition (gly residues). Over residues 311–322 (GKSKSRKSKRTK) the composition is skewed to basic residues. The region spanning 437–611 (IRPPVVTVMG…LTADAGLDLR (175 aa)) is the tr-type G domain. Positions 446 to 453 (GHVDHGKT) are G1. 446–453 (GHVDHGKT) contributes to the GTP binding site. Residues 471–475 (GITQH) form a G2 region. A G3 region spans residues 496-499 (DTPG). Residues 496-500 (DTPGH) and 550-553 (NKVD) each bind GTP. A G4 region spans residues 550–553 (NKVD). The tract at residues 586-588 (SAL) is G5.

This sequence belongs to the TRAFAC class translation factor GTPase superfamily. Classic translation factor GTPase family. IF-2 subfamily.

It localises to the cytoplasm. Its function is as follows. One of the essential components for the initiation of protein synthesis. Protects formylmethionyl-tRNA from spontaneous hydrolysis and promotes its binding to the 30S ribosomal subunits. Also involved in the hydrolysis of GTP during the formation of the 70S ribosomal complex. The chain is Translation initiation factor IF-2 from Clavibacter michiganensis subsp. michiganensis (strain NCPPB 382).